The following is a 77-amino-acid chain: U18-lycotoxin-Ls1a (77 aa).

A signal peptide spans Met-1 to Ala-22. A propeptide spanning residues Glu-23 to Arg-34 is cleaved from the precursor. Cystine bridges form between Cys-36–Cys-51, Cys-43–Cys-56, Cys-50–Cys-67, and Cys-58–Cys-65.

This sequence belongs to the neurotoxin 02 (plectoxin) family. Expressed by the venom gland.

Its subcellular location is the secreted. This Lycosa singoriensis (Wolf spider) protein is U18-lycotoxin-Ls1a.